The following is a 73-amino-acid chain: UPF0057 membrane protein At4g30650 (73 aa).

2 helical membrane-spanning segments follow: residues 4 to 24 (NMEV…GVCL) and 37 to 57 (LVLT…VIVF).

The protein belongs to the UPF0057 (PMP3) family.

It is found in the membrane. In Arabidopsis thaliana (Mouse-ear cress), this protein is UPF0057 membrane protein At4g30650.